Here is a 95-residue protein sequence, read N- to C-terminus: Feather keratin B-4 (95 aa).

S1 carries the post-translational modification N-acetylserine.

It belongs to the avian keratin family. The avian keratins (F-ker, S-ker, C-ker and B-ker) are a complex mixture of very similar polypeptides.

The sequence is that of Feather keratin B-4 from Anas platyrhynchos (Mallard).